Reading from the N-terminus, the 225-residue chain is NAD(P)H-quinone oxidoreductase subunit K, chloroplastic (225 aa).

[4Fe-4S] cluster-binding residues include Cys-43, Cys-44, Cys-108, and Cys-139.

Belongs to the complex I 20 kDa subunit family. As to quaternary structure, NDH is composed of at least 16 different subunits, 5 of which are encoded in the nucleus. [4Fe-4S] cluster is required as a cofactor.

The protein localises to the plastid. The protein resides in the chloroplast thylakoid membrane. The catalysed reaction is a plastoquinone + NADH + (n+1) H(+)(in) = a plastoquinol + NAD(+) + n H(+)(out). It catalyses the reaction a plastoquinone + NADPH + (n+1) H(+)(in) = a plastoquinol + NADP(+) + n H(+)(out). In terms of biological role, NDH shuttles electrons from NAD(P)H:plastoquinone, via FMN and iron-sulfur (Fe-S) centers, to quinones in the photosynthetic chain and possibly in a chloroplast respiratory chain. The immediate electron acceptor for the enzyme in this species is believed to be plastoquinone. Couples the redox reaction to proton translocation, and thus conserves the redox energy in a proton gradient. The polypeptide is NAD(P)H-quinone oxidoreductase subunit K, chloroplastic (Helianthus annuus (Common sunflower)).